Reading from the N-terminus, the 145-residue chain is Peptide methionine sulfoxide reductase MsrB (145 aa).

One can recognise a MsrB domain in the interval 4 to 127; sequence SDELKQRIGD…NSAALKFIPY (124 aa). The active-site Nucleophile is Cys116.

The protein belongs to the MsrB Met sulfoxide reductase family.

The enzyme catalyses L-methionyl-[protein] + [thioredoxin]-disulfide + H2O = L-methionyl-(R)-S-oxide-[protein] + [thioredoxin]-dithiol. The protein is Peptide methionine sulfoxide reductase MsrB of Streptococcus pyogenes serotype M1.